The chain runs to 90 residues: Cluster 41 protein AFLA_114800 (90 aa).

The helical transmembrane segment at 55–77 (GLLLLCCFYPIGNLILLVRLSLV) threads the bilayer. N-linked (GlcNAc...) asparagine glycosylation is present at Asn80.

Its subcellular location is the membrane. Its function is as follows. Cluster 41 protein; part of the gene cluster 41 that mediates the biosynthesis of an extracellular and diffusible metabolite that is able to stimulate colony sclerotial production. The chain is Cluster 41 protein AFLA_114800 from Aspergillus flavus (strain ATCC 200026 / FGSC A1120 / IAM 13836 / NRRL 3357 / JCM 12722 / SRRC 167).